The sequence spans 120 residues: NAD(P)H-quinone oxidoreductase subunit 3 (120 aa).

Helical transmembrane passes span 10–30 (FLGF…TNLI), 64–84 (MFAL…PWAV), and 89–109 (LGLL…IALA).

The protein belongs to the complex I subunit 3 family. In terms of assembly, NDH-1 can be composed of about 15 different subunits; different subcomplexes with different compositions have been identified which probably have different functions.

The protein resides in the cellular thylakoid membrane. It catalyses the reaction a plastoquinone + NADH + (n+1) H(+)(in) = a plastoquinol + NAD(+) + n H(+)(out). The enzyme catalyses a plastoquinone + NADPH + (n+1) H(+)(in) = a plastoquinol + NADP(+) + n H(+)(out). In terms of biological role, NDH-1 shuttles electrons from an unknown electron donor, via FMN and iron-sulfur (Fe-S) centers, to quinones in the respiratory and/or the photosynthetic chain. The immediate electron acceptor for the enzyme in this species is believed to be plastoquinone. Couples the redox reaction to proton translocation, and thus conserves the redox energy in a proton gradient. Cyanobacterial NDH-1 also plays a role in inorganic carbon-concentration. In Prochlorococcus marinus subsp. pastoris (strain CCMP1986 / NIES-2087 / MED4), this protein is NAD(P)H-quinone oxidoreductase subunit 3.